The primary structure comprises 144 residues: MDALDAISKWLAKQHVVTYCVGNGEALWCANAFYLYDRERVAFYLLSDTESRHGKMAGKLAPVAGTVNGQTKTVALIRGVQFSGELRLVEEPESEALRERYNRRFPVARVMSSPLWEIRLDEIKFTDNTLGFGKKLVWLRAEQA.

The protein belongs to the UPF0306 family.

The protein is UPF0306 protein ESA_03544 of Cronobacter sakazakii (strain ATCC BAA-894) (Enterobacter sakazakii).